The following is a 612-amino-acid chain: Threonine--tRNA ligase (612 aa).

The segment at 218 to 509 (NHRKLGVELG…LSEHFGGNFP (292 aa)) is catalytic. The Zn(2+) site is built by C310, H361, and H486.

This sequence belongs to the class-II aminoacyl-tRNA synthetase family. In terms of assembly, homodimer. Requires Zn(2+) as cofactor.

The protein localises to the cytoplasm. The catalysed reaction is tRNA(Thr) + L-threonine + ATP = L-threonyl-tRNA(Thr) + AMP + diphosphate + H(+). Its function is as follows. Catalyzes the attachment of threonine to tRNA(Thr) in a two-step reaction: L-threonine is first activated by ATP to form Thr-AMP and then transferred to the acceptor end of tRNA(Thr). Also edits incorrectly charged L-seryl-tRNA(Thr). The chain is Threonine--tRNA ligase from Helicobacter pylori (strain Shi470).